We begin with the raw amino-acid sequence, 386 residues long: Succinate--CoA ligase [ADP-forming] subunit beta (386 aa).

One can recognise an ATP-grasp domain in the interval 9–244 (KALLRAAGIK…TTQEDHRETQ (236 aa)). ATP contacts are provided by residues Lys-46, 53–55 (GRG), Glu-100, and Arg-103. Mg(2+) is bound by residues Asn-199 and Asp-213. Residues Asn-264 and 321–323 (GIV) contribute to the substrate site.

This sequence belongs to the succinate/malate CoA ligase beta subunit family. As to quaternary structure, heterotetramer of two alpha and two beta subunits. Requires Mg(2+) as cofactor.

It carries out the reaction succinate + ATP + CoA = succinyl-CoA + ADP + phosphate. It catalyses the reaction GTP + succinate + CoA = succinyl-CoA + GDP + phosphate. It participates in carbohydrate metabolism; tricarboxylic acid cycle; succinate from succinyl-CoA (ligase route): step 1/1. Its function is as follows. Succinyl-CoA synthetase functions in the citric acid cycle (TCA), coupling the hydrolysis of succinyl-CoA to the synthesis of either ATP or GTP and thus represents the only step of substrate-level phosphorylation in the TCA. The beta subunit provides nucleotide specificity of the enzyme and binds the substrate succinate, while the binding sites for coenzyme A and phosphate are found in the alpha subunit. The protein is Succinate--CoA ligase [ADP-forming] subunit beta of Dichelobacter nodosus (strain VCS1703A).